A 484-amino-acid chain; its full sequence is tRNA sulfurtransferase (484 aa).

One can recognise a THUMP domain in the interval P61–R165. ATP is bound by residues L183 to I184, K265, G287, and Q296. Cysteines 344 and 456 form a disulfide. One can recognise a Rhodanese domain in the interval L404 to P483. The active-site Cysteine persulfide intermediate is the C456.

Belongs to the ThiI family.

Its subcellular location is the cytoplasm. It catalyses the reaction [ThiI sulfur-carrier protein]-S-sulfanyl-L-cysteine + a uridine in tRNA + 2 reduced [2Fe-2S]-[ferredoxin] + ATP + H(+) = [ThiI sulfur-carrier protein]-L-cysteine + a 4-thiouridine in tRNA + 2 oxidized [2Fe-2S]-[ferredoxin] + AMP + diphosphate. It carries out the reaction [ThiS sulfur-carrier protein]-C-terminal Gly-Gly-AMP + S-sulfanyl-L-cysteinyl-[cysteine desulfurase] + AH2 = [ThiS sulfur-carrier protein]-C-terminal-Gly-aminoethanethioate + L-cysteinyl-[cysteine desulfurase] + A + AMP + 2 H(+). The protein operates within cofactor biosynthesis; thiamine diphosphate biosynthesis. Catalyzes the ATP-dependent transfer of a sulfur to tRNA to produce 4-thiouridine in position 8 of tRNAs, which functions as a near-UV photosensor. Also catalyzes the transfer of sulfur to the sulfur carrier protein ThiS, forming ThiS-thiocarboxylate. This is a step in the synthesis of thiazole, in the thiamine biosynthesis pathway. The sulfur is donated as persulfide by IscS. This Haemophilus ducreyi (strain 35000HP / ATCC 700724) protein is tRNA sulfurtransferase.